Reading from the N-terminus, the 176-residue chain is Pituitary adenylate cyclase-activating polypeptide (176 aa).

The signal sequence occupies residues 1–24; it reads MTMCSGARLALLVYGIIMHSSVYS. Residues 25 to 79 constitute a propeptide that is removed on maturation; it reads SPAAAGLRFPGIRPEEEAYGEDGNPLPDFDGSEPPGAGSPASAPRAAAAWYRPAG. Residues 39–68 form a disordered region; sequence EEEAYGEDGNPLPDFDGSEPPGAGSPASAP. Positions 56 to 68 are enriched in low complexity; sequence SEPPGAGSPASAP. The important for receptor binding stretch occupies residues 150–158; that stretch reads VKKYLAAVL. L158 bears the Leucine amide mark. K169 is modified (lysine amide). Residues 173–176 constitute a propeptide that is removed on maturation; sequence IAYL.

Belongs to the glucagon family.

It is found in the secreted. PACAP is a neuropeptide involved in diverse array of physiological processes through activating the PACAP subfamily of class B1 G protein-coupled receptors: VIP receptor 1 (VIPR1), VIP receptor 2 (VIPR2), and PACAP type I receptor (ADCYAP1R1). Exerts neuroprotective and general cytoprotective effects due to anti-apoptotic, anti-inflammatory, and antioxidant actions. Promotes neuron projection development through the RAPGEF2/Rap1/B-Raf/ERK pathway. In chromaffin cells, induces long-lasting increase of intracellular calcium concentrations and neuroendocrine secretion. Involved in the control of glucose homeostasis, induces insulin secretion by pancreatic beta cells. PACAP exists in two bioactive forms from proteolysis of the same precursor protein, PACAP27 and PACAP38, which differ by eleven amino acid residues in the C-terminus. This Homo sapiens (Human) protein is Pituitary adenylate cyclase-activating polypeptide.